The chain runs to 347 residues: 4-hydroxy-2-oxovalerate aldolase 4 (347 aa).

The region spanning Ile9–Ile259 is the Pyruvate carboxyltransferase domain. Substrate contacts are provided by residues Arg17–Asp18, Ser171, and His198. Asp18 lines the Mn(2+) pocket. Residues His198 and His200 each contribute to the Mn(2+) site. Tyr289 is a substrate binding site.

This sequence belongs to the 4-hydroxy-2-oxovalerate aldolase family.

It catalyses the reaction (S)-4-hydroxy-2-oxopentanoate = acetaldehyde + pyruvate. The protein is 4-hydroxy-2-oxovalerate aldolase 4 of Rhodococcus opacus (strain B4).